A 352-amino-acid chain; its full sequence is Photosystem II D2 protein (352 aa).

Residues 40–60 (TAYLALGGWLTGTTFVTSWYT) traverse the membrane as a helical segment. His-117 is a binding site for chlorophyll a. Residues 124–140 (GFMLRQFEIARLVGIRP) traverse the membrane as a helical segment. Pheophytin a contacts are provided by Gln-129 and Asn-142. A helical transmembrane segment spans residues 152–165 (VFVSVFLIYPLGQS). Residue His-197 participates in chlorophyll a binding. The helical transmembrane segment at 207–227 (GALLCAIHGATVENTLFEDGE) threads the bilayer. A plastoquinone is bound by residues His-214 and Phe-261. His-214 lines the Fe cation pocket. His-268 lines the Fe cation pocket. A helical membrane pass occupies residues 278–294 (GLWTSSIGIIGLALNLR).

This sequence belongs to the reaction center PufL/M/PsbA/D family. As to quaternary structure, PSII is composed of 1 copy each of membrane proteins PsbA, PsbB, PsbC, PsbD, PsbE, PsbF, PsbH, PsbI, PsbJ, PsbK, PsbL, PsbM, PsbT, PsbX, PsbY, PsbZ, Psb30/Ycf12, at least 3 peripheral proteins of the oxygen-evolving complex and a large number of cofactors. It forms dimeric complexes. The cofactor is The D1/D2 heterodimer binds P680, chlorophylls that are the primary electron donor of PSII, and subsequent electron acceptors. It shares a non-heme iron and each subunit binds pheophytin, quinone, additional chlorophylls, carotenoids and lipids. There is also a Cl(-1) ion associated with D1 and D2, which is required for oxygen evolution. The PSII complex binds additional chlorophylls, carotenoids and specific lipids..

It is found in the plastid. The protein localises to the organellar chromatophore thylakoid membrane. The enzyme catalyses 2 a plastoquinone + 4 hnu + 2 H2O = 2 a plastoquinol + O2. Its function is as follows. Photosystem II (PSII) is a light-driven water:plastoquinone oxidoreductase that uses light energy to abstract electrons from H(2)O, generating O(2) and a proton gradient subsequently used for ATP formation. It consists of a core antenna complex that captures photons, and an electron transfer chain that converts photonic excitation into a charge separation. The D1/D2 (PsbA/PsbD) reaction center heterodimer binds P680, the primary electron donor of PSII as well as several subsequent electron acceptors. D2 is needed for assembly of a stable PSII complex. The protein is Photosystem II D2 protein of Paulinella chromatophora.